Reading from the N-terminus, the 22-residue chain is Hemocyanin subunit 4 (22 aa).

It belongs to the tyrosinase family. Hemocyanin subfamily. In terms of tissue distribution, hemolymph.

It localises to the secreted. It is found in the extracellular space. Functionally, hemocyanins are copper-containing oxygen carriers occurring freely dissolved in the hemolymph of many mollusks and arthropods. This chain is Hemocyanin subunit 4, found in Homarus americanus (American lobster).